The chain runs to 147 residues: uncharacterized protein (147 aa).

This is an uncharacterized protein from Aedes vexans (Inland floodwater mosquito).